The chain runs to 308 residues: MWKRWLALALALVAVAWVRAEEELRSKSKICANVFCGAGRECAVTEKGEPTCLCIEQCKPHKRPVCGSNGKTYLNHCELHRDACLTGSKIQVDYDGHCKEKKSISPSASPVVCYQSNRDELRRRIIQWLEAEIIPDGWFSKGSNYSEILDKYFKNFDNGDSRLDSSEFLKFVEQNETAINITTYPDQENNKLLRGLCVDALIELSDENADWKLSFQEFLKCLNPSFNPPEKKCALEDETYADGAETEVDCNRCVCACGNWVCTAMTCDGKNQKGAQTQTEEEMTRYVQELQKHQETAEKTKRVSTKEI.

The N-terminal stretch at 1–20 (MWKRWLALALALVAVAWVRA) is a signal peptide. The Follistatin-like domain occupies 30–53 (ICANVFCGAGRECAVTEKGEPTCL). 5 disulfides stabilise this stretch: C31–C42, C36–C52, C54–C84, C58–C77, and C66–C98. One can recognise a Kazal-like domain in the interval 48 to 100 (GEPTCLCIEQCKPHKRPVCGSNGKTYLNHCELHRDACLTGSKIQVDYDGHCKE). A glycan (N-linked (GlcNAc...) asparagine) is linked at N144. The region spanning 144–178 (NYSEILDKYFKNFDNGDSRLDSSEFLKFVEQNETA) is the EF-hand 1 domain. Residue S165 is modified to Phosphoserine. 2 N-linked (GlcNAc...) asparagine glycosylation sites follow: N175 and N180. The 36-residue stretch at 193 to 228 (LRGLCVDALIELSDENADWKLSFQEFLKCLNPSFNP) folds into the EF-hand 2 domain. The 55-residue stretch at 233-287 (CALEDETYADGAETEVDCNRCVCACGNWVCTAMTCDGKNQKGAQTQTEEEMTRYV) folds into the VWFC domain.

As to quaternary structure, homodimer. Interacts with SCN10A. Interacts with DIP2A; DIP2A may act as a cell surface receptor for FSTL1. Interacts with BMP4. Interacts with CD14; this interaction promotes TL4-mediated signaling cascade.

The protein resides in the secreted. Secreted glycoprotein that is involved in various physiological processes, such as angiogenesis, regulation of the immune response, cell proliferation and differentiation. Plays a role in the development of the central nervous system, skeletal system, lungs, and ureter. Promotes endothelial cell survival, migration and differentiation into network structures in an AKT-dependent manner. Also promotes survival of cardiac myocytes. Initiates various signaling cascades by activating different receptors on the cell surface such as DIP2A, TLR4 or BMP receptors. This is Follistatin-related protein 1 (FSTL1) from Macaca fascicularis (Crab-eating macaque).